Consider the following 66-residue polypeptide: FMRFamide-like neuropeptides 24 (66 aa).

The signal sequence occupies residues 1 to 22 (MSRTSIILVLAIFVAIAAIAQC). The propeptide occupies 23–48 (RNIQYDVDEISPEAAFRYAQWGEIPH). Position 61 is a phenylalanine amide (Phe61). Positions 65-66 (SV) are excised as a propeptide.

Belongs to the FARP (FMRFamide related peptide) family.

Its subcellular location is the secreted. In terms of biological role, FMRFamides and FMRFamide-like peptides are neuropeptides. This is FMRFamide-like neuropeptides 24 from Caenorhabditis briggsae.